We begin with the raw amino-acid sequence, 162 residues long: Ribosome maturation factor RimP (162 aa).

The protein belongs to the RimP family.

Its subcellular location is the cytoplasm. Functionally, required for maturation of 30S ribosomal subunits. The sequence is that of Ribosome maturation factor RimP from Cupriavidus necator (strain ATCC 17699 / DSM 428 / KCTC 22496 / NCIMB 10442 / H16 / Stanier 337) (Ralstonia eutropha).